Consider the following 857-residue polypeptide: Trehalose transporter 1 (857 aa).

Disordered stretches follow at residues 1–28 (MSGRDNRGAGGGGGGHQPLSNAMGKLKE) and 62–202 (DPFL…QKAT). Topologically, residues 1 to 392 (MSGRDNRGAG…VYRPTTNPIY (392 aa)) are cytoplasmic. Alanine 9 bears the Phosphothreonine mark. Glycine 12 is subject to Phosphoserine. Residues 69 to 81 (VSPQRHPQNTVRT) are compositionally biased toward polar residues. Over residues 134 to 143 (EIREHRDRQQ) the composition is skewed to basic and acidic residues. Residues 171 to 181 (GNSNTNSNKAA) are compositionally biased toward polar residues. 3 positions are modified to phosphoserine: serine 248, serine 249, and serine 250. Disordered regions lie at residues 249–269 (SSEEEFHKTRREFQGRKHQSL) and 280–299 (VLQGSSTDSDEEGEDAEHKR). 2 positions are modified to phosphoserine: serine 320 and serine 322. The disordered stretch occupies residues 327 to 346 (LTSRQHFQQQRSISTDSRKS). Over residues 330-341 (RQHFQQQRSIST) the composition is skewed to polar residues. The helical transmembrane segment at 393 to 413 (IWTQVLAALSVSLGSLVVGFV) threads the bilayer. Residues 414 to 440 (SAYTSPALVSMTDRNITSFEVTQDAGS) are Extracellular-facing. N-linked (GlcNAc...) asparagine glycosylation occurs at asparagine 428. Residues 441 to 461 (WVGGIMPLAGLAGGIAGGPLI) form a helical membrane-spanning segment. Over 462-473 (EYLGRRNTILAT) the chain is Cytoplasmic. Residues 474 to 494 (AVPFIVSSLLIACAVNVAMVL) traverse the membrane as a helical segment. Residues 495–497 (CGR) are Extracellular-facing. The helical transmembrane segment at 498–518 (FLAGFCVGIASLSLPVYLGET) threads the bilayer. Residues 519–528 (VQPEVRGTLG) are Cytoplasmic-facing. The chain crosses the membrane as a helical span at residues 529–549 (LLPTAFGNIGILLCFVAGSFM). The N-linked (GlcNAc...) asparagine glycan is linked to asparagine 550. The Extracellular portion of the chain corresponds to 550-552 (NWS). Residues 553-573 (MLAFLGAALPVPFLILMFLIP) form a helical membrane-spanning segment. At 574–636 (ETPRWFVGRG…ELLKLNNLKP (63 aa)) the chain is on the cytoplasmic side. A helical transmembrane segment spans residues 637–657 (LSISLGLMFFQQFSGINAVIF). Residues 658–673 (YTVQIFKDAGSTIDGN) lie on the Extracellular side of the membrane. A helical membrane pass occupies residues 674 to 694 (LCTIIVGIVNFLATFIGIVLI). Over 695-700 (DRAGRK) the chain is Cytoplasmic. The chain crosses the membrane as a helical span at residues 701–721 (ILLYVSDIAMVLTLFVLGGFF). Residues 722 to 740 (YCKTYGPDVSHLGWLPLTC) lie on the Extracellular side of the membrane. The helical transmembrane segment at 741–761 (FVIYILGFSLGFGPIPWLMMG) threads the bilayer. Over 762–767 (EILPAK) the chain is Cytoplasmic. The chain crosses the membrane as a helical span at residues 768-788 (IRGSAASVATAFNWFCTFVVT). Residues 789–801 (KTFQDLTVAMGAH) are Extracellular-facing. Residues 802–822 (GAFWLFGAICFVGLFFVIIYV) form a helical membrane-spanning segment. At 823 to 857 (PETQGKTLEDIERKMMGRVRRMSSVANIKPLSFNM) the chain is on the cytoplasmic side. Phosphoserine occurs at positions 845 and 846.

This sequence belongs to the major facilitator superfamily. Sugar transporter (TC 2.A.1.1) family. Trehalose transporter subfamily. In terms of tissue distribution, expressed in perineurial glia of the outer layer of the nervous system that forms the blood brain barrier (at protein level). Expressed in the fat body (at protein level). May be specifically expressed in perineurial glia (at protein level). As to expression, may be specifically expressed in the fat body (at protein level).

It is found in the cell membrane. The protein resides in the vesicle. It catalyses the reaction alpha,alpha-trehalose(in) = alpha,alpha-trehalose(out). The catalysed reaction is D-glucose(out) = D-glucose(in). Functionally, low-capacity facilitative transporter for trehalose. Can also transport glucose. Does not transport maltose, sucrose, lactose or fructose. Mediates the bidirectional transfer of trehalose. Responsible for the transport of trehalose synthesized in the fat body and the incorporation of trehalose into other tissues that require a carbon source, thereby regulating trehalose levels in the hemolymph. Required in glial cells of the blood brain barrier to fuel glycolysis but not required in neurons. Neurons rely on the citric acid cycle for their energy needs and utilise alanine and lactate, by-products of glial cell glycolysis released into the hemolymph, as fuel. Increased expression in glial cells of the blood brain barrier during starvation and increased cell surface localization enhances carbohydrate uptake to protect the central nervous system from restricted nutrient availability. This is Trehalose transporter 1 from Drosophila melanogaster (Fruit fly).